Reading from the N-terminus, the 142-residue chain is Nucleoside diphosphate kinase (142 aa).

ATP contacts are provided by lysine 11, phenylalanine 59, arginine 87, threonine 93, arginine 104, and asparagine 114. Residue histidine 117 is the Pros-phosphohistidine intermediate of the active site.

Belongs to the NDK family. Homotetramer. Mg(2+) serves as cofactor.

It localises to the cytoplasm. The catalysed reaction is a 2'-deoxyribonucleoside 5'-diphosphate + ATP = a 2'-deoxyribonucleoside 5'-triphosphate + ADP. The enzyme catalyses a ribonucleoside 5'-diphosphate + ATP = a ribonucleoside 5'-triphosphate + ADP. In terms of biological role, major role in the synthesis of nucleoside triphosphates other than ATP. The ATP gamma phosphate is transferred to the NDP beta phosphate via a ping-pong mechanism, using a phosphorylated active-site intermediate. In Photobacterium profundum (strain SS9), this protein is Nucleoside diphosphate kinase.